We begin with the raw amino-acid sequence, 311 residues long: Cell division control protein 2 homolog 3 (311 aa).

The Protein kinase domain occupies 23 to 306 (YNRMDILGEG…AKAALQHPWF (284 aa)). ATP is bound by residues 29–37 (LGEGTYGVV) and Lys-52. Thr-33 carries the post-translational modification Phosphothreonine. Tyr-34 carries the phosphotyrosine modification. The Proton acceptor role is filled by Asp-145.

This sequence belongs to the protein kinase superfamily. CMGC Ser/Thr protein kinase family. CDC2/CDKX subfamily. In terms of assembly, forms a stable but non-covalent complex with a regulatory subunit and with a cyclin.

It carries out the reaction L-seryl-[protein] + ATP = O-phospho-L-seryl-[protein] + ADP + H(+). The catalysed reaction is L-threonyl-[protein] + ATP = O-phospho-L-threonyl-[protein] + ADP + H(+). With respect to regulation, phosphorylation at Thr-33 or Tyr-34 inactivates the enzyme. Its function is as follows. Probably involved in the control of the cell cycle. This chain is Cell division control protein 2 homolog 3 (CRK3), found in Trypanosoma brucei brucei.